Reading from the N-terminus, the 70-residue chain is Small ribosomal subunit protein bS21 (70 aa).

Belongs to the bacterial ribosomal protein bS21 family.

In Polynucleobacter asymbioticus (strain DSM 18221 / CIP 109841 / QLW-P1DMWA-1) (Polynucleobacter necessarius subsp. asymbioticus), this protein is Small ribosomal subunit protein bS21.